Consider the following 276-residue polypeptide: Cholesterol 25-hydroxylase-like protein 1, member 2 (276 aa).

An N-linked (GlcNAc...) asparagine glycan is attached at Asn30. The next 3 membrane-spanning stretches (helical) occupy residues 39–59, 90–110, and 126–146; these read LFPV…YLSC, GVTL…QWMW, and LVGG…IWHF. The Fatty acid hydroxylase domain occupies 134–265; the sequence is LLLFDLQYFI…FSHWDKMFGT (132 aa). Residues 144–148 carry the Histidine box-1 motif; that stretch reads WHFLH. The Histidine box-2 signature appears at 159-163; sequence HAIHH. N-linked (GlcNAc...) asparagine glycosylation occurs at Asn164. 2 helical membrane-spanning segments follow: residues 175-195 and 199-219; these read CLGG…PVLL and LLTT…DHCG. Positions 240–246 match the Histidine box-3 motif; it reads KHDVHHQ.

The protein belongs to the sterol desaturase family. Requires Fe cation as cofactor.

It localises to the endoplasmic reticulum membrane. Functionally, may catalyze the formation of 25-hydroxycholesterol from cholesterol. This chain is Cholesterol 25-hydroxylase-like protein 1, member 2, found in Danio rerio (Zebrafish).